The chain runs to 388 residues: P2X purinoceptor 4 (388 aa).

The Cytoplasmic portion of the chain corresponds to 1–33 (MAGCCSVLGSFLFEYDTPRIVLIRSRKVGLMNR). Residues 34–54 (VVQLLILAYVIGWVFVWEKGY) traverse the membrane as a helical segment. Topologically, residues 55-338 (QETDSVVSSV…KFDIIPTMIN (284 aa)) are extracellular. The ATP site is built by lysine 67 and lysine 69. Lysine 67 and lysine 69 together coordinate CTP. N-linked (GlcNAc...) asparagine glycosylation is found at asparagine 75, asparagine 110, asparagine 131, asparagine 153, and asparagine 184. 3 disulfide bridges follow: cysteine 116-cysteine 165, cysteine 126-cysteine 149, and cysteine 132-cysteine 159. Residues threonine 186 and leucine 188 each coordinate ATP. Threonine 186 serves as a coordination point for CTP. Residues asparagine 199 and asparagine 208 are each glycosylated (N-linked (GlcNAc...) asparagine). 2 disulfide bridges follow: cysteine 217–cysteine 227 and cysteine 261–cysteine 270. 3 residues coordinate ATP: asparagine 293, arginine 295, and lysine 313. The CTP site is built by asparagine 293, arginine 295, and lysine 313. A helical membrane pass occupies residues 339–359 (VGSGLALLGVATVLCDVIVLY). Residues 360 to 388 (CMKKRYYYRDKKYKYVEDYEQGLSGEMNQ) are Cytoplasmic-facing.

This sequence belongs to the P2X receptor family. Functional P2RXs are organized as homomeric and heteromeric trimers. Functional P2XRs are organized as homomeric and heteromeric trimers. Forms heterotrimer with P2RX1. Interacts with P2RX7 (via C-terminus); this interaction is functional only in the presence of ATP. Forms heterotrimer with P2RX4; functional differences between homomeric P2RX4 and P2RX4/6 heterotrimer are minor. Interacts with AP1M2.

It is found in the cell membrane. The protein resides in the lysosome membrane. It carries out the reaction K(+)(in) = K(+)(out). It catalyses the reaction Na(+)(in) = Na(+)(out). The enzyme catalyses Ca(2+)(in) = Ca(2+)(out). Its activity is regulated as follows. Activated by ATP. pH-dependent and inhibited by acidic pH. ATP-gated nonselective transmembrane cation channel permeable to potassium, sodium and calcium. CTP, but not GTP or UTP, functions as a weak affinity agonist for P2RX4. Activated by extracellularly released ATP, it plays multiple role in immunity and central nervous system physiology. Plays a key role in initial steps of T-cell activation and Ca(2+) microdomain formation. Also participates in basal T-cell activity without TCR/CD3 stimulation. Promotes the differentiation and activation of Th17 cells via expression of retinoic acid-related orphan receptor C/RORC. Upon activation, drives microglia motility via the PI3K/Akt pathway. Could also function as an ATP-gated cation channel of lysosomal membranes. The sequence is that of P2X purinoceptor 4 (P2rx4) from Mus musculus (Mouse).